Consider the following 320-residue polypeptide: Cytochrome c biogenesis protein CcsA (320 aa).

Helical transmembrane passes span 14–34 (SFFL…YINI), 37–57 (ITIL…TFLL), 68–88 (LSNL…IHLI), 97–117 (WLGI…TLSL), 143–163 (MMLS…ILII), 228–248 (VISL…VWAN), 263–283 (WALI…IKGW), and 289–309 (AIIA…VNLL).

It belongs to the CcmF/CycK/Ccl1/NrfE/CcsA family. May interact with Ccs1.

Its subcellular location is the plastid. It localises to the chloroplast thylakoid membrane. Functionally, required during biogenesis of c-type cytochromes (cytochrome c6 and cytochrome f) at the step of heme attachment. The polypeptide is Cytochrome c biogenesis protein CcsA (Marchantia polymorpha (Common liverwort)).